A 1230-amino-acid polypeptide reads, in one-letter code: Cullin-associated NEDD8-dissociated protein 1 (1230 aa).

At Ala-2 the chain carries N-acetylalanine. HEAT repeat units lie at residues 2–39, 44–81, 83–119, 131–165, 171–208, 210–247, 248–282, 289–366, 370–407, 424–467, 471–510, and 515–552; these read ASAS…KDSI, DSER…KVKE, QVET…ELPP, CKKI…LSRQ, NFHP…SCGN, VFVD…QAGH, RIGE…FESF, EVYP…TRHE, EFYK…QTRP, PLTM…VLPG, QHIP…NHSP, and PHVQ…VIRP. Residues 315–344 form a disordered region; that stretch reads DEDEDENAMDADGGDDDDQGSDDEYSDDDD. Phosphoserine is present on Ser-335. Ser-558 carries the post-translational modification Phosphoserine. 15 HEAT repeats span residues 563–602, 606–643, 646–683, 688–725, 729–768, 770–808, 809–845, 852–889, 890–927, 928–960, 961–998, 1002–1039, 1043–1097, 1099–1133, and 1140–1189; these read PYIK…NLGD, PDLS…LKID, PVLG…NYSD, AMID…VYPS, KISG…TGTN, LGYM…ALTR, ACPK…LGEV, SGQL…GNLP, EYLP…GLKP, YVEN…KLTL, IDPE…DHPQ, PLLK…NKPS, DLLD…DSCL, RLDI…LSTL, and QRLD…IPEA. N6-acetyllysine is present on Lys-971.

The protein belongs to the CAND family. In terms of assembly, interacts with TBP. Part of a complex that contains CUL1 and RBX1. Interacts with unneddylated cullins: interacts with CUL1, CUL2, CUL3, CUL4A, CUL4B and CUL5. Does not bind neddylated CUL1. Interaction with cullins is abolished in presence of COMMD1, which antagonizes with CAND1 for interacting with cullins. Interacts with ERCC6. Interacts with DCUN1D1, DCUN1D2, DCUN1D3, DCUN1D4 and DCUN1D5; these interactions are bridged by cullins and strongly inhibits the neddylation of cullins.

Its subcellular location is the cytoplasm. The protein resides in the nucleus. Key assembly factor of SCF (SKP1-CUL1-F-box protein) E3 ubiquitin ligase complexes that promotes the exchange of the substrate-recognition F-box subunit in SCF complexes, thereby playing a key role in the cellular repertoire of SCF complexes. Acts as a F-box protein exchange factor. The exchange activity of CAND1 is coupled with cycles of neddylation conjugation: in the deneddylated state, cullin-binding CAND1 binds CUL1-RBX1, increasing dissociation of the SCF complex and promoting exchange of the F-box protein. Probably plays a similar role in other cullin-RING E3 ubiquitin ligase complexes. The chain is Cullin-associated NEDD8-dissociated protein 1 (Cand1) from Mus musculus (Mouse).